A 390-amino-acid polypeptide reads, in one-letter code: S-adenosylmethionine synthase 2 (390 aa).

Glu9 serves as a coordination point for Mg(2+). Residue His15 participates in ATP binding. K(+) is bound at residue Glu43. L-methionine contacts are provided by Glu56 and Gln99. Residues 167–169 (DGK), 235–238 (SGRF), Asp246, 252–253 (RK), Ala269, Lys273, and Lys277 contribute to the ATP site. Asp246 provides a ligand contact to L-methionine. Lys277 contacts L-methionine.

This sequence belongs to the AdoMet synthase family. Homotetramer. Mn(2+) is required as a cofactor. The cofactor is Mg(2+). Co(2+) serves as cofactor. Requires K(+) as cofactor.

Its subcellular location is the cytoplasm. It carries out the reaction L-methionine + ATP + H2O = S-adenosyl-L-methionine + phosphate + diphosphate. It participates in amino-acid biosynthesis; S-adenosyl-L-methionine biosynthesis; S-adenosyl-L-methionine from L-methionine: step 1/1. Catalyzes the formation of S-adenosylmethionine from methionine and ATP. The reaction comprises two steps that are both catalyzed by the same enzyme: formation of S-adenosylmethionine (AdoMet) and triphosphate, and subsequent hydrolysis of the triphosphate. In Solanum tuberosum (Potato), this protein is S-adenosylmethionine synthase 2 (METK2).